A 438-amino-acid chain; its full sequence is Probable glucose-6-phosphate isomerase (438 aa).

E280 (proton donor) is an active-site residue. Residues H301 and K410 contribute to the active site.

This sequence belongs to the GPI family.

It localises to the cytoplasm. It catalyses the reaction alpha-D-glucose 6-phosphate = beta-D-fructose 6-phosphate. Its pathway is carbohydrate biosynthesis; gluconeogenesis. It functions in the pathway carbohydrate degradation; glycolysis; D-glyceraldehyde 3-phosphate and glycerone phosphate from D-glucose: step 2/4. Functionally, catalyzes the reversible isomerization of glucose-6-phosphate to fructose-6-phosphate. The protein is Probable glucose-6-phosphate isomerase of Methanococcus maripaludis (strain DSM 14266 / JCM 13030 / NBRC 101832 / S2 / LL).